Reading from the N-terminus, the 414-residue chain is MATTPAPPGAPPKPTWDPRSATPLPWLRPTIRIRLTLLYGGMFLIAGILLLSIIYLLAAQAVRTGNEPLYKIVDFTDLKVSSSTCPVVDNGGLSLSDFNAAISDCMDHQRKVALDNLLSRSLLALLGLAVIAFAFGYAMAGRVLSPLGRITRTARAVAGSDLSRRIELDGPDDELKELADTFDDMLERLQRAFTAQQRFVGNASHELRTPLAINRTLLEVHLSDPGAPVELQQLGKTLLATNERSELLVEGLLLLARSDNQIVERKPVDLAEVAGQAIDQVHAEAESKGVEVRGTREAAVVQGNGVLLERIALNLVQNAVRYNVAGQGWVEVATAVENGQAVLVVTNTGPVVPAYEVDNLFEPFRRLRTERTGSDKGVGLGLSIARSVARAHGGHISAQPREGGGLVMRVTLPV.

Positions 1–15 are enriched in pro residues; sequence MATTPAPPGAPPKPT. The segment at 1–21 is disordered; sequence MATTPAPPGAPPKPTWDPRSA. Transmembrane regions (helical) follow at residues 37 to 57 and 121 to 141; these read LLYG…IYLL and SLLA…AMAG. An HAMP domain is found at 142–194; sequence RVLSPLGRITRTARAVAGSDLSRRIELDGPDDELKELADTFDDMLERLQRAFT. In terms of domain architecture, Histidine kinase spans 202–414; it reads NASHELRTPL…GLVMRVTLPV (213 aa). H205 carries the phosphohistidine; by autocatalysis modification.

It localises to the cell membrane. The catalysed reaction is ATP + protein L-histidine = ADP + protein N-phospho-L-histidine.. Member of the two-component regulatory system CutS/CutR, involved in the regulation of copper metabolism. The chain is Sensor protein CutS (cutS) from Streptomyces coelicolor (strain ATCC BAA-471 / A3(2) / M145).